The primary structure comprises 585 residues: Pyruvate kinase (585 aa).

Arginine 32 is a substrate binding site. Asparagine 34, serine 36, aspartate 66, and threonine 67 together coordinate K(+). Position 34–37 (34–37) interacts with ATP; the sequence is NFSH. Residues arginine 73 and lysine 156 each coordinate ATP. Glutamate 222 provides a ligand contact to Mg(2+). Positions 245, 246, and 278 each coordinate substrate. Residue aspartate 246 coordinates Mg(2+).

This sequence belongs to the pyruvate kinase family. The protein in the C-terminal section; belongs to the PEP-utilizing enzyme family. As to quaternary structure, homotetramer. It depends on Mg(2+) as a cofactor. K(+) is required as a cofactor.

The catalysed reaction is pyruvate + ATP = phosphoenolpyruvate + ADP + H(+). It functions in the pathway carbohydrate degradation; glycolysis; pyruvate from D-glyceraldehyde 3-phosphate: step 5/5. The polypeptide is Pyruvate kinase (pyk) (Bacillus licheniformis).